The sequence spans 340 residues: Mitochondrial distribution and morphology protein 12 (340 aa).

Residues 1-321 (MSIDLDWDGM…WPSWIKVSME (321 aa)) enclose the SMP-LTD domain. 3 disordered regions span residues 79 to 107 (HYLP…TNPI), 161 to 184 (SVRE…EDRE), and 319 to 340 (SMED…EDEH). Residues 89–106 (QRRSAPSTPHIHTNTTNP) are compositionally biased toward polar residues. Residues 321–340 (EDEDSDDEEGEEEGDQEDEH) show a composition bias toward acidic residues.

It belongs to the MDM12 family. In terms of assembly, component of the ER-mitochondria encounter structure (ERMES) or MDM complex, composed of MMM1, MDM10, MDM12 and MDM34. An MMM1 homodimer associates with one molecule of MDM12 on each side in a pairwise head-to-tail manner, and the SMP-LTD domains of MMM1 and MDM12 generate a continuous hydrophobic tunnel for phospholipid trafficking.

The protein resides in the mitochondrion outer membrane. Its subcellular location is the endoplasmic reticulum membrane. Component of the ERMES/MDM complex, which serves as a molecular tether to connect the endoplasmic reticulum (ER) and mitochondria. Components of this complex are involved in the control of mitochondrial shape and protein biogenesis, and function in nonvesicular lipid trafficking between the ER and mitochondria. MDM12 is required for the interaction of the ER-resident membrane protein MMM1 and the outer mitochondrial membrane-resident beta-barrel protein MDM10. The MDM12-MMM1 subcomplex functions in the major beta-barrel assembly pathway that is responsible for biogenesis of all mitochondrial outer membrane beta-barrel proteins, and acts in a late step after the SAM complex. The MDM10-MDM12-MMM1 subcomplex further acts in the TOM40-specific pathway after the action of the MDM12-MMM1 complex. Essential for establishing and maintaining the structure of mitochondria and maintenance of mtDNA nucleoids. The protein is Mitochondrial distribution and morphology protein 12 of Yarrowia lipolytica (strain CLIB 122 / E 150) (Yeast).